Here is a 286-residue protein sequence, read N- to C-terminus: Pantothenate synthetase (286 aa).

An ATP-binding site is contributed by 31 to 38; sequence MGALHEGH. Residue His-38 is the Proton donor of the active site. Gln-65 contributes to the (R)-pantoate binding site. Residue Gln-65 coordinates beta-alanine. 153-156 is an ATP binding site; it reads GEKD. Residue Gln-159 participates in (R)-pantoate binding. 190–193 contacts ATP; that stretch reads LSSR.

Belongs to the pantothenate synthetase family. Homodimer.

The protein localises to the cytoplasm. It catalyses the reaction (R)-pantoate + beta-alanine + ATP = (R)-pantothenate + AMP + diphosphate + H(+). It participates in cofactor biosynthesis; (R)-pantothenate biosynthesis; (R)-pantothenate from (R)-pantoate and beta-alanine: step 1/1. Functionally, catalyzes the condensation of pantoate with beta-alanine in an ATP-dependent reaction via a pantoyl-adenylate intermediate. The polypeptide is Pantothenate synthetase (Corynebacterium diphtheriae (strain ATCC 700971 / NCTC 13129 / Biotype gravis)).